Reading from the N-terminus, the 306-residue chain is OVARIAN TUMOR DOMAIN-containing deubiquitinating enzyme 1 (306 aa).

Residues 81-295 (IGIRRTRGDG…PGHYDILYPK (215 aa)) enclose the OTU domain. Asp-89 is an active-site residue. Residue Cys-92 is the Nucleophile of the active site. Catalysis depends on residues His-259 and His-288.

This sequence belongs to the peptidase C65 family.

The enzyme catalyses Thiol-dependent hydrolysis of ester, thioester, amide, peptide and isopeptide bonds formed by the C-terminal Gly of ubiquitin (a 76-residue protein attached to proteins as an intracellular targeting signal).. Cleavage activities for 'Lys-48'- and 'Lys-63'-linked ubiquitin (UB) tetramers is inhibited by UB aldehyde and N-ethylmaleimide but not by the metalloprotease inhibitors 1,10-phenanthroline and EDTA, and the serine protease inhibitor phenylmethylsulfonyl fluoride. Functionally, hydrolase that can remove conjugated ubiquitin from proteins in vitro and may therefore play an important regulatory role at the level of protein turnover by preventing degradation. Cysteine protease with a preference for Met-1 and 'Lys-48' over 'Lys-63'-linked ubiquitin (UB) tetramers (e.g. Ub2, Ub3 and Ub4) as substrates. This is OVARIAN TUMOR DOMAIN-containing deubiquitinating enzyme 1 from Arabidopsis thaliana (Mouse-ear cress).